The primary structure comprises 601 residues: Sodium-dependent phosphate transport protein 2C (601 aa).

Topologically, residues 1–75 (MPNSLAGDQV…HQVVSGFLKA (75 aa)) are cytoplasmic. The residue at position 4 (S4) is a Phosphoserine. Residues 76 to 96 (CGLLGSLYFFICSLDILSSAF) form a helical membrane-spanning segment. Residues 97–110 (QLLGSKMAGDIFKD) lie on the Extracellular side of the membrane. A helical membrane pass occupies residues 111–131 (NVVLSNPVAGLVIGVVVTVLV). Residues 132-187 (QSSSTSSSIVVSMVASKSLTVQASVPIIMGVNVGTSITSTLVSMAQSGDRDEFQRA) are Cytoplasmic-facing. A helical membrane pass occupies residues 188–208 (FGGSAVHGIFNWLTVLVLLPL). The Extracellular portion of the chain corresponds to 209-324 (ENATAALERL…FAGSELTDLA (116 aa)). N210, N264, N267, and N299 each carry an N-linked (GlcNAc...) asparagine glycan. C275 and C311 are oxidised to a cystine. Residues 325–345 (VGFILLAGSLLVLCVCLVLIV) traverse the membrane as a helical segment. The Cytoplasmic segment spans residues 346–369 (KLLNSVLRGRIAQAVKTVINADFP). Residues 370–390 (FPFGWLSGYLAILVGAGLTFL) traverse the membrane as a helical segment. The Extracellular portion of the chain corresponds to 391 to 447 (LQSSSVFTAAIVPLMGVGVINLERAYPLFLGSNIGTTTTALLAALASPADTLLFAVQ). A helical membrane pass occupies residues 448–468 (VALIHFFFNLAGILLWYLVPV). The Cytoplasmic segment spans residues 469–487 (LRLPIPLAKRFGDLTAQYR). Residues 488–508 (WVAIVYLLLTFLLLPLAAFGL) traverse the membrane as a helical segment. Residues 509 to 512 (SLAG) lie on the Extracellular side of the membrane. The chain crosses the membrane as a helical span at residues 513–533 (GSVLAAVGGPLVGLVLLIILV). The Cytoplasmic segment spans residues 534 to 601 (NVLQRHRPSW…NPQVIASQQL (68 aa)).

It belongs to the SLC34A transporter family. Highly expressed in the kidney. Not found in any of the other tested tissues.

The protein localises to the apical cell membrane. It catalyses the reaction 2 Na(+)(out) + phosphate(out) = 2 Na(+)(in) + phosphate(in). In terms of biological role, involved in actively transporting phosphate into cells via Na(+) cotransport in the renal brush border membrane. The cotransport has a Na(+):Pi stoichiometry of 2:1 and is electroneutral. The sequence is that of Sodium-dependent phosphate transport protein 2C (Slc34a3) from Rattus norvegicus (Rat).